Here is a 196-residue protein sequence, read N- to C-terminus: ATP-dependent Clp protease proteolytic subunit (196 aa).

Ser101 (nucleophile) is an active-site residue. His126 is an active-site residue.

The protein belongs to the peptidase S14 family. In terms of assembly, component of the chloroplastic Clp protease core complex.

It localises to the plastid. The protein localises to the chloroplast stroma. It carries out the reaction Hydrolysis of proteins to small peptides in the presence of ATP and magnesium. alpha-casein is the usual test substrate. In the absence of ATP, only oligopeptides shorter than five residues are hydrolyzed (such as succinyl-Leu-Tyr-|-NHMec, and Leu-Tyr-Leu-|-Tyr-Trp, in which cleavage of the -Tyr-|-Leu- and -Tyr-|-Trp bonds also occurs).. Cleaves peptides in various proteins in a process that requires ATP hydrolysis. Has a chymotrypsin-like activity. Plays a major role in the degradation of misfolded proteins. This chain is ATP-dependent Clp protease proteolytic subunit, found in Atropa belladonna (Belladonna).